Here is a 159-residue protein sequence, read N- to C-terminus: SsrA-binding protein (159 aa).

The tract at residues 134–159 is disordered; that stretch reads KLHDKRETSKERDWNRQKNRLLKERG. A compositionally biased stretch (basic and acidic residues) spans 137-159; it reads DKRETSKERDWNRQKNRLLKERG.

This sequence belongs to the SmpB family.

Its subcellular location is the cytoplasm. Functionally, required for rescue of stalled ribosomes mediated by trans-translation. Binds to transfer-messenger RNA (tmRNA), required for stable association of tmRNA with ribosomes. tmRNA and SmpB together mimic tRNA shape, replacing the anticodon stem-loop with SmpB. tmRNA is encoded by the ssrA gene; the 2 termini fold to resemble tRNA(Ala) and it encodes a 'tag peptide', a short internal open reading frame. During trans-translation Ala-aminoacylated tmRNA acts like a tRNA, entering the A-site of stalled ribosomes, displacing the stalled mRNA. The ribosome then switches to translate the ORF on the tmRNA; the nascent peptide is terminated with the 'tag peptide' encoded by the tmRNA and targeted for degradation. The ribosome is freed to recommence translation, which seems to be the essential function of trans-translation. The protein is SsrA-binding protein of Sinorhizobium fredii (strain NBRC 101917 / NGR234).